Consider the following 319-residue polypeptide: 4-diphosphocytidyl-2-C-methyl-D-erythritol kinase (319 aa).

Residue Lys-21 is part of the active site. 106–116 (PIGAGLAGGSS) contributes to the ATP binding site. Residue Asp-148 is part of the active site.

This sequence belongs to the GHMP kinase family. IspE subfamily.

It carries out the reaction 4-CDP-2-C-methyl-D-erythritol + ATP = 4-CDP-2-C-methyl-D-erythritol 2-phosphate + ADP + H(+). It participates in isoprenoid biosynthesis; isopentenyl diphosphate biosynthesis via DXP pathway; isopentenyl diphosphate from 1-deoxy-D-xylulose 5-phosphate: step 3/6. In terms of biological role, catalyzes the phosphorylation of the position 2 hydroxy group of 4-diphosphocytidyl-2C-methyl-D-erythritol. This Prochlorococcus marinus (strain MIT 9303) protein is 4-diphosphocytidyl-2-C-methyl-D-erythritol kinase.